The following is a 124-amino-acid chain: Small ribosomal subunit protein uS12 (124 aa).

The tract at residues 1 to 29 (MPTINQLVRRPRRPRESANKAPALQHNPQ) is disordered. Asp-90 carries the post-translational modification 3-methylthioaspartic acid.

Belongs to the universal ribosomal protein uS12 family. In terms of assembly, part of the 30S ribosomal subunit. Contacts proteins S8 and S17. May interact with IF1 in the 30S initiation complex.

In terms of biological role, with S4 and S5 plays an important role in translational accuracy. Interacts with and stabilizes bases of the 16S rRNA that are involved in tRNA selection in the A site and with the mRNA backbone. Located at the interface of the 30S and 50S subunits, it traverses the body of the 30S subunit contacting proteins on the other side and probably holding the rRNA structure together. The combined cluster of proteins S8, S12 and S17 appears to hold together the shoulder and platform of the 30S subunit. In Anaplasma marginale (strain Florida), this protein is Small ribosomal subunit protein uS12.